The primary structure comprises 194 residues: Leucyl/phenylalanyl-tRNA--protein transferase (194 aa).

It belongs to the L/F-transferase family.

It localises to the cytoplasm. The catalysed reaction is N-terminal L-lysyl-[protein] + L-leucyl-tRNA(Leu) = N-terminal L-leucyl-L-lysyl-[protein] + tRNA(Leu) + H(+). It carries out the reaction N-terminal L-arginyl-[protein] + L-leucyl-tRNA(Leu) = N-terminal L-leucyl-L-arginyl-[protein] + tRNA(Leu) + H(+). It catalyses the reaction L-phenylalanyl-tRNA(Phe) + an N-terminal L-alpha-aminoacyl-[protein] = an N-terminal L-phenylalanyl-L-alpha-aminoacyl-[protein] + tRNA(Phe). Functionally, functions in the N-end rule pathway of protein degradation where it conjugates Leu, Phe and, less efficiently, Met from aminoacyl-tRNAs to the N-termini of proteins containing an N-terminal arginine or lysine. In Prosthecochloris aestuarii (strain DSM 271 / SK 413), this protein is Leucyl/phenylalanyl-tRNA--protein transferase.